The chain runs to 386 residues: Succinate--CoA ligase [ADP-forming] subunit beta (386 aa).

Residues 9–244 enclose the ATP-grasp domain; it reads KELLREFGVA…TTEEDPREVE (236 aa). ATP contacts are provided by residues Lys46, 53–55, Glu99, Ser102, and Glu107; that span reads GRG. Asn199 and Asp213 together coordinate Mg(2+). Residues Asn264 and 321–323 each bind substrate; that span reads GIM.

It belongs to the succinate/malate CoA ligase beta subunit family. Heterotetramer of two alpha and two beta subunits. Requires Mg(2+) as cofactor.

The catalysed reaction is succinate + ATP + CoA = succinyl-CoA + ADP + phosphate. The enzyme catalyses GTP + succinate + CoA = succinyl-CoA + GDP + phosphate. It functions in the pathway carbohydrate metabolism; tricarboxylic acid cycle; succinate from succinyl-CoA (ligase route): step 1/1. Succinyl-CoA synthetase functions in the citric acid cycle (TCA), coupling the hydrolysis of succinyl-CoA to the synthesis of either ATP or GTP and thus represents the only step of substrate-level phosphorylation in the TCA. The beta subunit provides nucleotide specificity of the enzyme and binds the substrate succinate, while the binding sites for coenzyme A and phosphate are found in the alpha subunit. This Exiguobacterium sp. (strain ATCC BAA-1283 / AT1b) protein is Succinate--CoA ligase [ADP-forming] subunit beta.